The chain runs to 111 residues: Mitochondrial import inner membrane translocase subunit TIM14 (111 aa).

The Mitochondrial intermembrane portion of the chain corresponds to 1 to 3 (MTG). The helical transmembrane segment at 4–24 (GLIAAGLGLAAVGFGARYVLR) threads the bilayer. At 25–111 (NQALIKKGME…AKDLMESTKS (87 aa)) the chain is on the mitochondrial matrix side. Positions 58 to 111 (EAAKILGITPSAKPAKIKDAHKKVMIVNHPDRGGSPYLAAKINEAKDLMESTKS) constitute a J domain.

It belongs to the TIM14 family. In terms of assembly, probable component of the PAM complex at least composed of a mitochondrial HSP70 protein, GrpE, tim-44, tim-16 and tim-14.

It localises to the mitochondrion inner membrane. Functionally, probable component of the PAM complex, a complex required for the translocation of transit peptide-containing proteins from the inner membrane into the mitochondrial matrix in an ATP-dependent manner. May act as a co-chaperone that stimulate the ATP-dependent activity. This Caenorhabditis briggsae protein is Mitochondrial import inner membrane translocase subunit TIM14 (dnj-21).